We begin with the raw amino-acid sequence, 133 residues long: Small ribosomal subunit protein uS9 (133 aa).

This sequence belongs to the universal ribosomal protein uS9 family.

The protein is Small ribosomal subunit protein uS9 of Ureaplasma parvum serovar 3 (strain ATCC 700970).